The sequence spans 88 residues: Small ribosomal subunit protein bS20 (88 aa).

A disordered region spans residues 1 to 36 (MANTSSAKKATRKIARRTAVNKSRRTQMRGSVRTVE).

Belongs to the bacterial ribosomal protein bS20 family.

Its function is as follows. Binds directly to 16S ribosomal RNA. This chain is Small ribosomal subunit protein bS20, found in Rhodopseudomonas palustris (strain HaA2).